Reading from the N-terminus, the 57-residue chain is UPF0391 membrane protein HNE_2348 (57 aa).

Transmembrane regions (helical) follow at residues 4 to 24 (WALT…GGIA) and 27 to 47 (AASI…ITFV).

This sequence belongs to the UPF0391 family.

Its subcellular location is the cell membrane. The polypeptide is UPF0391 membrane protein HNE_2348 (Hyphomonas neptunium (strain ATCC 15444)).